The sequence spans 272 residues: Phosphate import ATP-binding protein PstB (272 aa).

The ABC transporter domain maps to 18 to 257 (VSIQNATISY…FNDTDKIFNA (240 aa)). 50-57 (GPSGCGKS) contributes to the ATP binding site.

It belongs to the ABC transporter superfamily. Phosphate importer (TC 3.A.1.7) family. As to quaternary structure, the complex is composed of two ATP-binding proteins (PstB), two transmembrane proteins (PstC and PstA) and a solute-binding protein (PstS).

It localises to the cell inner membrane. The catalysed reaction is phosphate(out) + ATP + H2O = ADP + 2 phosphate(in) + H(+). Functionally, part of the ABC transporter complex PstSACB involved in phosphate import. Responsible for energy coupling to the transport system. This chain is Phosphate import ATP-binding protein PstB, found in Synechococcus sp. (strain CC9311).